The chain runs to 484 residues: Glutamate--tRNA ligase (484 aa).

The short motif at 9-19 (PSPTGNLHIGT) is the 'HIGH' region element. Residues C98, C100, H125, and H127 each contribute to the Zn(2+) site. A 'KMSKS' region motif is present at residues 250-254 (KLSKR). ATP is bound at residue K253.

This sequence belongs to the class-I aminoacyl-tRNA synthetase family. Glutamate--tRNA ligase type 1 subfamily. Monomer. It depends on Zn(2+) as a cofactor.

Its subcellular location is the cytoplasm. The enzyme catalyses tRNA(Glu) + L-glutamate + ATP = L-glutamyl-tRNA(Glu) + AMP + diphosphate. Functionally, catalyzes the attachment of glutamate to tRNA(Glu) in a two-step reaction: glutamate is first activated by ATP to form Glu-AMP and then transferred to the acceptor end of tRNA(Glu). The chain is Glutamate--tRNA ligase from Crocosphaera subtropica (strain ATCC 51142 / BH68) (Cyanothece sp. (strain ATCC 51142)).